Reading from the N-terminus, the 645-residue chain is Cytoplasmic dynein 1 intermediate chain 1 (645 aa).

Composition is skewed to basic and acidic residues over residues 1–13 and 20–58; these read MSDKSDLKAELER and QIREEKKRKEEERKKKEADMQQKKEPVQDDSDLDRKRRE. Disordered stretches follow at residues 1–58 and 96–125; these read MSDK…KRRE and MSPSSKSVSTPSEAGSQDSGDLGPLTRTLQ. An N-acetylserine modification is found at serine 2. An interaction with DCTN1 region spans residues 2–123; that stretch reads SDKSDLKAEL…SGDLGPLTRT (122 aa). Phosphoserine is present on residues serine 50 and serine 100. Residues 96 to 107 are compositionally biased toward low complexity; it reads MSPSSKSVSTPS. Threonine 105 carries the post-translational modification Phosphothreonine. Phosphoserine is present on residues serine 107, serine 111, and serine 114. Residues 147–163 are interaction with DYNLT1; it reads KLGVSKVTQVDFLPREV. The disordered stretch occupies residues 169-221; the sequence is ETQTPLATHQSEEDEEDEEMVESKVGQDSELENQDKKQEVKEAPPRELTEEEK. Phosphothreonine is present on threonine 176. A phosphoserine mark is found at serine 179 and serine 197. Residues 189 to 221 show a composition bias toward basic and acidic residues; that stretch reads VESKVGQDSELENQDKKQEVKEAPPRELTEEEK. WD repeat units lie at residues 285–334, 338–378, 387–428, 437–477, 482–527, 530–570, and 576–615; these read SKHR…TTPE, HCQS…RTPV, AHTH…TPQE, SKPV…AGIG, GHQG…PLYS, DNAD…EVPT, and EGASALNRVRWAQAGKEVAVGDSEGRIWVYDVGELAVPHN. Residue serine 635 is modified to Phosphoserine.

Belongs to the dynein intermediate chain family. As to quaternary structure, homodimer. The cytoplasmic dynein 1 complex consists of two catalytic heavy chains (HCs) and a number of non-catalytic subunits presented by intermediate chains (ICs), light intermediate chains (LICs) and light chains (LCs); the composition seems to vary in respect to the IC, LIC and LC composition. The heavy chain homodimer serves as a scaffold for the probable homodimeric assembly of the respective non-catalytic subunits. The ICs and LICs bind directly to the HC dimer and the LCs assemble on the IC dimer. Interacts with DYNC1H1. Interacts with DYNLT1 and DYNLT3. Interacts with DCTN1. Interacts with MCRS1; the interaction is required for the proper distribution of centriolar satellites.

The protein resides in the cytoplasm. It is found in the chromosome. It localises to the centromere. Its subcellular location is the kinetochore. The protein localises to the cytoskeleton. The protein resides in the spindle pole. Its function is as follows. Acts as one of several non-catalytic accessory components of the cytoplasmic dynein 1 complex that are thought to be involved in linking dynein to cargos and to adapter proteins that regulate dynein function. Cytoplasmic dynein 1 acts as a motor for the intracellular retrograde motility of vesicles and organelles along microtubules. The intermediate chains mediate the binding of dynein to dynactin via its 150 kDa component (p150-glued) DCTN1. May play a role in mediating the interaction of cytoplasmic dynein with membranous organelles and kinetochores. This is Cytoplasmic dynein 1 intermediate chain 1 (DYNC1I1) from Homo sapiens (Human).